Reading from the N-terminus, the 282-residue chain is BURP domain-containing protein BNM2A (282 aa).

A signal peptide spans 1 to 26 (MASLRFSVTFPALLSLLLLSLWVVEA). A BURP domain is found at 60-282 (FFKISDLKLG…PLDNIVWVSK (223 aa)).

As to expression, expressed in the radicle and cotyledon of germinating seeds 2 days post-imbibition (DPI), in stems and roots of 30-DPI young plants and in floral buds, but not in fully open flowers or leaves. Expressed in the embryo and seed coat tissues of developing seeds. The protein accumulates only in seeds and only long after transcript accumulation becomes evident.

The protein resides in the protein storage vacuole. The chain is BURP domain-containing protein BNM2A from Brassica napus (Rape).